The following is a 252-amino-acid chain: MATSKVLLSNVLFVFVCFGICSAARTLLTLEDRVNLHVGTVVGGYGGGGGSGGGGGGAAVELGGGGYGEGAGGGEGAGAGYGAAGGGHGGGGGNGGGGGGGADGGGYGGGAGKGGGEGYGGGGANGGGYGGGGGSGGGGGGGAGGAGSGYGGGEGSGAGGGYGGANGGGGGGNGGGGGGGSGGAHGGGAAGGGEGAGQGAGGGYGGGAAGGGGRGSGGGGGGGYGGGGARGSGYGGGGGSGEGGGHGGGYYP.

The signal sequence occupies residues 1 to 30 (MATSKVLLSNVLFVFVCFGICSAARTLLTL). Residues 231–252 (GSGYGGGGGSGEGGGHGGGYYP) are disordered.

As to expression, expressed in young hypocotyls.

The protein resides in the secreted. Its subcellular location is the cell wall. Its function is as follows. Responsible for plasticity of the cell wall. This Phaseolus vulgaris (Kidney bean) protein is Glycine-rich cell wall structural protein 1.0.